The sequence spans 192 residues: Cysteine and glycine-rich protein 1 (192 aa).

Positions 10-61 (CGVCQKAVYFAEEVQCEGSSFHKSCFLCMVCKKNLDSTTVAVHGDEIYCKSC) constitute an LIM zinc-binding 1 domain. The Nuclear localization signal motif lies at 64–69 (KKYGPK). The region spanning 118–169 (CPRCGQAVYAAEKVIGAGKSWHKSCFRCAKCGKSLESTTLADKDGEIYCKGC) is the LIM zinc-binding 2 domain.

In terms of assembly, probable monomer. Interacts with ZYX. Most prominent in tissues that are enriched in smooth muscle cells, such as gizzard, stomach, and intestine. Lower level in the heart, no expression in liver, skeletal muscle, or brain.

It localises to the nucleus. It is found in the cytoplasm. The protein localises to the cytoskeleton. Heat stable protein, that interacts with zyxin/ZYX. May be a component of a signal transduction pathway that mediates adhesion-stimulated changes in gene expression. In Gallus gallus (Chicken), this protein is Cysteine and glycine-rich protein 1 (CSRP1).